A 295-amino-acid chain; its full sequence is 3-hydroxy-5-phosphonooxypentane-2,4-dione thiolase (295 aa).

Catalysis depends on K203, which acts as the Schiff-base intermediate with substrate.

The protein belongs to the DeoC/FbaB aldolase family. Homodecamer.

Its subcellular location is the cytoplasm. It catalyses the reaction dihydroxyacetone phosphate + acetyl-CoA = 3-hydroxy-2,4-dioxopentyl phosphate + CoA. Its function is as follows. Involved in the degradation of phospho-AI-2, thereby terminating induction of the lsr operon and closing the AI-2 signaling cycle. Catalyzes the transfer of an acetyl moiety from 3-hydroxy-5-phosphonooxypentane-2,4-dione to CoA to form glycerone phosphate and acetyl-CoA. In Enterobacter sp. (strain 638), this protein is 3-hydroxy-5-phosphonooxypentane-2,4-dione thiolase.